The sequence spans 122 residues: UPF0102 protein VCM66_0538 (122 aa).

It belongs to the UPF0102 family.

This chain is UPF0102 protein VCM66_0538, found in Vibrio cholerae serotype O1 (strain M66-2).